Consider the following 420-residue polypeptide: Dynein axonemal assembly factor 4 (420 aa).

Residues 3-87 (LQVSDYSWQQ…KEAAMWETLS (85 aa)) enclose the CS domain. The mediates interaction with ESR1 and STUB1 stretch occupies residues 7 to 103 (DYSWQQTKTA…EMMQRIREKS (97 aa)). TPR repeat units follow at residues 290–323 (PEWLKDKGNKLFATENYLAAINAYNLAIRLNNKM), 324–357 (PLLYLNRAACHLKLKNLHKAIEDSSKALELLMPP), and 366–399 (MKAHVRRGTAFCQLELYVEGLQDYEAALKIDPSN).

Interacts with ZMYND10. Interacts with STUB1. Interacts with ESR1 and ESR2. Interacts with DNAAF2. Interacts with CCT3, CCT4, CCT5 and CCT8. Interacts with DNAAF6/PIH1D3.

It localises to the nucleus. The protein localises to the cytoplasm. It is found in the cell projection. Its subcellular location is the neuron projection. The protein resides in the dynein axonemal particle. Its function is as follows. Involved in neuronal migration during development of the cerebral neocortex. May regulate the stability and proteasomal degradation of the estrogen receptors that play an important role in neuronal differentiation, survival and plasticity. Axonemal dynein assembly factor required for ciliary motility. The protein is Dynein axonemal assembly factor 4 of Pan paniscus (Pygmy chimpanzee).